Consider the following 370-residue polypeptide: tRNA-specific 2-thiouridylase MnmA (370 aa).

ATP contacts are provided by residues 19 to 26 and Leu-45; that span reads AMSGGVDS. The Nucleophile role is filled by Cys-113. A disulfide bridge connects residues Cys-113 and Cys-209. Gly-137 provides a ligand contact to ATP. The interval 159–161 is interaction with tRNA; it reads KDQ. The active-site Cysteine persulfide intermediate is Cys-209.

Belongs to the MnmA/TRMU family.

It is found in the cytoplasm. The catalysed reaction is S-sulfanyl-L-cysteinyl-[protein] + uridine(34) in tRNA + AH2 + ATP = 2-thiouridine(34) in tRNA + L-cysteinyl-[protein] + A + AMP + diphosphate + H(+). Functionally, catalyzes the 2-thiolation of uridine at the wobble position (U34) of tRNA, leading to the formation of s(2)U34. This chain is tRNA-specific 2-thiouridylase MnmA, found in Rickettsia conorii (strain ATCC VR-613 / Malish 7).